Consider the following 91-residue polypeptide: Small ribosomal subunit protein uS19 (91 aa).

Belongs to the universal ribosomal protein uS19 family.

Protein S19 forms a complex with S13 that binds strongly to the 16S ribosomal RNA. The protein is Small ribosomal subunit protein uS19 of Methylacidiphilum infernorum (isolate V4) (Methylokorus infernorum (strain V4)).